The primary structure comprises 175 residues: Bifunctional protein PyrR (175 aa).

Residues 40 to 41 (TR), arginine 85, 102 to 110 (DDVLYTGRT), arginine 135, and valine 159 contribute to the substrate site. Positions 98–110 (VIIIDDVLYTGRT) match the PRPP-binding motif.

Belongs to the purine/pyrimidine phosphoribosyltransferase family. PyrR subfamily. In terms of assembly, homodimer and homohexamer; in equilibrium.

The catalysed reaction is UMP + diphosphate = 5-phospho-alpha-D-ribose 1-diphosphate + uracil. Functionally, regulates transcriptional attenuation of the pyrimidine nucleotide (pyr) operon by binding in a uridine-dependent manner to specific sites on pyr mRNA. This disrupts an antiterminator hairpin in the RNA and favors formation of a downstream transcription terminator, leading to a reduced expression of downstream genes. Its function is as follows. Also displays a weak uracil phosphoribosyltransferase activity which is not physiologically significant. This Staphylococcus saprophyticus subsp. saprophyticus (strain ATCC 15305 / DSM 20229 / NCIMB 8711 / NCTC 7292 / S-41) protein is Bifunctional protein PyrR.